We begin with the raw amino-acid sequence, 293 residues long: Protein Pat (293 aa).

The 101-residue stretch at 187–287 (LPDIILNPLD…LLLRTRQDRA (101 aa)) folds into the BEN domain.

Interacts with poc1b. An mRNA and protein component of germ plasm and primordial germ cells (PGCs) throughout oogenesis and early development, being first localized to the granulo-fibrillar material (GFM) of the mitochondrial cloud in stage I and II oocytes and to the periphery of mature germinal granules both in oocytes and in embryos. Shows some somatic expression including the ectodermal cells of tailbud embryos. In adults, only expressed in ovaries.

It is found in the cytoplasm. It localises to the nucleus. Probably plays a role in germ plasm formation, positioning and maintenance. This Xenopus laevis (African clawed frog) protein is Protein Pat.